The sequence spans 247 residues: Neurotrophic factor BDNF precursor form (247 aa).

Residues 1 to 18 (MTILFLTMVISYFGCMKA) form the signal peptide. The propeptide occupies 19–128 (APMKEANARG…AANMSMRVRR (110 aa)). An N-linked (GlcNAc...) asparagine glycan is attached at asparagine 121. 3 cysteine pairs are disulfide-bonded: cysteine 141/cysteine 208, cysteine 186/cysteine 237, and cysteine 196/cysteine 239.

This sequence belongs to the NGF-beta family. In terms of assembly, monomers and homodimers. Binds to NTRK2/TRKB. Can form heterodimers with other neurotrophin family members, such as NTF3 and NTF4 (in vitro), but the physiological relevance of this is not clear. BDNF precursor form: interacts with the heterodimer formed by NGFR and SORCS2. Mature BDNF has much lower affinity for the heterodimer formed by NGFR and SORCS2. Post-translationally, N-glycosylated and glycosulfated, contrary to mature BDNF. Mature BDNF is produced by proteolytic removal of the propeptide, catalyzed by a FURIN family member. In addition, the precursor form is proteolytically cleaved within the propeptide, but this is not an obligatory intermediate for the production of mature BDNF. Can be converted into mature BDNF by plasmin (PLG).

Its subcellular location is the secreted. Its function is as follows. Important signaling molecule that activates signaling cascades downstream of NTRK2. During development, promotes the survival and differentiation of selected neuronal populations of the peripheral and central nervous systems. Participates in axonal growth, pathfinding and in the modulation of dendritic growth and morphology. Major regulator of synaptic transmission and plasticity at adult synapses in many regions of the CNS. The versatility of BDNF is emphasized by its contribution to a range of adaptive neuronal responses including long-term potentiation (LTP), long-term depression (LTD), certain forms of short-term synaptic plasticity, as well as homeostatic regulation of intrinsic neuronal excitability. Important signaling molecule that activates signaling cascades downstream of NTRK2. Activates signaling cascades via the heterodimeric receptor formed by NGFR and SORCS2. Signaling via NGFR and SORCS2 plays a role in synaptic plasticity and long-term depression (LTD). Binding to NGFR and SORCS2 promotes neuronal apoptosis. Promotes neuronal growth cone collapse. The chain is Neurotrophic factor BDNF precursor form (BDNF) from Equus caballus (Horse).